Consider the following 194-residue polypeptide: Peptidyl-tRNA hydrolase (194 aa).

Position 17 (Y17) interacts with tRNA. The Proton acceptor role is filled by H22. Y68, N70, and N116 together coordinate tRNA.

It belongs to the PTH family. As to quaternary structure, monomer.

The protein localises to the cytoplasm. It carries out the reaction an N-acyl-L-alpha-aminoacyl-tRNA + H2O = an N-acyl-L-amino acid + a tRNA + H(+). Functionally, hydrolyzes ribosome-free peptidyl-tRNAs (with 1 or more amino acids incorporated), which drop off the ribosome during protein synthesis, or as a result of ribosome stalling. Catalyzes the release of premature peptidyl moieties from peptidyl-tRNA molecules trapped in stalled 50S ribosomal subunits, and thus maintains levels of free tRNAs and 50S ribosomes. This chain is Peptidyl-tRNA hydrolase, found in Pseudomonas fluorescens (strain SBW25).